The sequence spans 735 residues: Ethylene receptor 1 (735 aa).

3 helical membrane-spanning segments follow: residues 23-43 (ISDF…IYFV), 54-74 (VLVQ…INLW), and 92-112 (VLTA…IPDL). Cu cation contacts are provided by cysteine 65 and histidine 69. A GAF domain is found at 158–307 (DRHTILKTTL…VVADQVAVAL (150 aa)). The Histidine kinase domain occupies 350 to 586 (VMNHEMRTPM…IFDVKLAISN (237 aa)). Phosphohistidine; by autocatalysis is present on histidine 353. One can recognise a Response regulatory domain in the interval 609-726 (KVLVMDENGV…NMRNVLSDRL (118 aa)). Aspartate 657 is subject to 4-aspartylphosphate. Residue lysine 711 forms a Glycyl lysine isopeptide (Lys-Gly) (interchain with G-Cter in ubiquitin) linkage.

The protein belongs to the ethylene receptor family. As to quaternary structure, homodimer; disulfide-linked. The cofactor is Cu cation. Post-translationally, activation probably requires a transfer of a phosphate group between a His in the transmitter domain and an Asp of the receiver domain.

The protein resides in the endoplasmic reticulum membrane. The catalysed reaction is ATP + protein L-histidine = ADP + protein N-phospho-L-histidine.. Its function is as follows. May act early in the ethylene signal transduction pathway, possibly as an ethylene receptor, or as a regulator of the pathway. This is Ethylene receptor 1 (ETR1) from Brassica oleracea (Wild cabbage).